A 217-amino-acid polypeptide reads, in one-letter code: Transmembrane protein 253 (217 aa).

4 consecutive transmembrane segments (helical) span residues 33–53 (LVLA…AVSV), 62–82 (MATA…TVTL), 96–116 (MMIF…VEVM), and 138–158 (LSAE…LFLL). The interval 187–217 (PGLENGPTVASTGANERVGQREQTRAALLPP) is disordered.

It localises to the membrane. This Homo sapiens (Human) protein is Transmembrane protein 253 (TMEM253).